The sequence spans 158 residues: RNA pyrophosphohydrolase (158 aa).

The Nudix hydrolase domain maps to 6–150 (GYRLNVGIVL…KRDVYRKVMQ (145 aa)). The Nudix box signature appears at 39 to 60 (GGINIGETPEQAMYRELFEEIG).

The protein belongs to the Nudix hydrolase family. RppH subfamily. Requires a divalent metal cation as cofactor.

In terms of biological role, accelerates the degradation of transcripts by removing pyrophosphate from the 5'-end of triphosphorylated RNA, leading to a more labile monophosphorylated state that can stimulate subsequent ribonuclease cleavage. This chain is RNA pyrophosphohydrolase, found in Blochmanniella pennsylvanica (strain BPEN).